The sequence spans 3412 residues: Genome polyprotein (3412 aa).

Residues 1–104 (MSGRKAQGKT…LSSRKRRSNE (104 aa)) are Cytoplasmic-facing. Residues 38–72 (PGPSRGVQGFIFFFLFNILTGKKLTAHLKKLWRML) are hydrophobic; homodimerization of capsid protein C. Positions 102 to 121 (SNEMALFPLLLLGLLALSGG) are cleaved as a propeptide — ER anchor for the capsid protein C, removed in mature form by serine protease NS3. The chain crosses the membrane as a helical span at residues 105–125 (MALFPLLLLGLLALSGGVTLV). Over 126-244 (RKNRWLLLNV…GERQLQKIER (119 aa)) the chain is Extracellular. 2 N-linked (GlcNAc...) asparagine; by host glycosylation sites follow: asparagine 134 and asparagine 150. A helical membrane pass occupies residues 245–265 (WLVRNPFFAVTALAIAYLVGN). At 266-270 (NTTQR) the chain is on the cytoplasmic side. A helical membrane pass occupies residues 271–285 (VVIALLVLAVGPAYS). At 286-730 (AHCIGITDRD…TVFGSAFQGL (445 aa)) the chain is on the extracellular side. 8 cysteine pairs are disulfide-bonded: cysteine 288–cysteine 315, cysteine 345–cysteine 401, cysteine 345–cysteine 406, cysteine 359–cysteine 390, cysteine 377–cysteine 401, cysteine 377–cysteine 406, cysteine 467–cysteine 568, and cysteine 585–cysteine 615. The segment at 383–396 (DRGWGNGCGLFGKG) is fusion peptide. Residues 731-751 (FGGLSWITKVIMGAVLIWVGI) traverse the membrane as a helical segment. At 752–757 (NTRNMT) the chain is on the extracellular side. The helical transmembrane segment at 758-778 (MSMSMILVGVIMMFLSLGVGA) threads the bilayer. At 779-1132 (DQGCAVNFGK…LVRSWVTAGE (354 aa)) the chain is on the extracellular side. Intrachain disulfides connect cysteine 782–cysteine 793, cysteine 833–cysteine 921, cysteine 957–cysteine 1002, cysteine 1058–cysteine 1107, cysteine 1069–cysteine 1091, and cysteine 1090–cysteine 1094. N-linked (GlcNAc...) asparagine; by host glycans are attached at residues asparagine 908 and asparagine 986. A helical membrane pass occupies residues 1133-1153 (VHAVPFGLVSMMIAMEVVLRR). The Cytoplasmic segment spans residues 1154–1201 (RQGPKQMLVGGVVLLGAMLVGQVTVLDLVKFVVAVGLHFHEINNGGDA). Residues 1202–1222 (MYMALIASFSIRPGLLMGFGL) traverse the membrane as a helical segment. At 1223-1287 (RTLWSPRERL…ILPLMALMTP (65 aa)) the chain is on the lumenal side. A helical transmembrane segment spans residues 1288–1308 (MTMHEVRMATMLFCTVVIIGV). Over 1309–1355 (LHQNSKDTSMQKTIPIVALTLTSYMGLTQPFLGLCAYMSTQVFGRRS) the chain is Cytoplasmic. Residues 1356–1376 (IPVNEALAAAGLVGVLAGLAF) form a helical membrane-spanning segment. At 1377–1378 (QD) the chain is on the lumenal side. Residues 1379–1399 (MENFLGPIAVGGILMMLVSVA) traverse the membrane as a helical segment. Topologically, residues 1400 to 1456 (GRVDGLELKKLGEISWEEEAEISGSSSRYDVALSEQGEFKLLSEDKVPWDQIVMTSL) are cytoplasmic. Positions 1407-1446 (LKKLGEISWEEEAEISGSSSRYDVALSEQGEFKLLSEDKV) are interacts with and activates NS3 protease. An intramembrane region (helical) is located at residues 1457–1477 (ALVGAAIHPFALLLVLGGWIL). Residues 1478–2157 (HIKGARRSGD…RNALSMMPEA (680 aa)) lie on the Cytoplasmic side of the membrane. The Peptidase S7 domain maps to 1485–1665 (SGDVLWDIPT…ELKEESKEEL (181 aa)). Residues histidine 1537, aspartate 1561, and serine 1622 each act as charge relay system; for serine protease NS3 activity in the active site. The region spanning 1669–1825 (PTMLKKGMTT…HSNGEIEDVQ (157 aa)) is the Helicase ATP-binding domain. Residues 1673–1676 (KKGM) form an important for RNA-binding region. Residue 1682 to 1689 (FHPGAGKT) coordinates ATP. A DEAH box motif is present at residues 1773-1776 (DEAH). Positions 1836–1997 (GHEWILADKR…VRGGMVAPLY (162 aa)) constitute a Helicase C-terminal domain. Lysine 1877 is modified (N6-acetyllysine; by host). The interval 1942 to 1963 (AAQRRGRIGRNPNRDGDSYYYS) is disordered. A helical transmembrane segment spans residues 2158–2178 (MTIVMLFLLAGLLTSGAVIFF). Over 2179–2186 (MSPKGMSR) the chain is Lumenal. The helical intramembrane region spans 2187–2207 (MSMAMGTMAGSGYLMFLGGVK). Topologically, residues 2208-2209 (PT) are lumenal. Residues 2210 to 2230 (HISYVMLIFFVLMVVVIPEPG) form a helical membrane-spanning segment. Residues 2231 to 2241 (QQRTIQDNQVA) are Cytoplasmic-facing. Residues 2242-2262 (YLIIGILTLLSVVAANELGML) form a helical membrane-spanning segment. The Lumenal segment spans residues 2263 to 2293 (EKTKEDFFGKRDITTPSGAIPWSWPDLDLKP). Residues 2294 to 2314 (GAAWTVYVGIVTMLSPMLHHW) constitute an intramembrane region (helical). Residues 2315 to 2360 (IKVEYGNLSLSGIAQSASVLSFMDKGIPFMKMNISVVILLVSGWNS) are Lumenal-facing. Residues 2361-2380 (ITVIPLLCGIGGAMLHWTLI) form a helical membrane-spanning segment. Topologically, residues 2381–2421 (LPGIKAQQSKLAQKRVFHGVAKNPVVDGNPTADIEEAPEMP) are cytoplasmic. The chain crosses the membrane as a helical span at residues 2422 to 2442 (ALYEKKLALYLLLALSLMSVA). Residues 2443 to 2445 (MCR) lie on the Lumenal side of the membrane. Residues 2446 to 2466 (TPFSLAEGIVLSSAALGPLIE) traverse the membrane as a helical segment. Over 2467–3411 (GNTSLLWNGP…VDADLQPGEL (945 aa)) the chain is Cytoplasmic. The mRNA cap 0-1 NS5-type MT domain maps to 2508 to 2772 (GSASGKTLGE…DVILPIGTRS (265 aa)). An S-adenosyl-L-methionine-binding site is contributed by serine 2563. Serine 2563 is modified (phosphoserine). Lysine 2568 functions as the For 2'-O-MTase activity in the catalytic mechanism. Glycine 2593, tryptophan 2594, threonine 2611, leucine 2612, aspartate 2638, and valine 2639 together coordinate S-adenosyl-L-methionine. Catalysis depends on aspartate 2653, which acts as the For 2'-O-MTase activity. Residue isoleucine 2654 coordinates S-adenosyl-L-methionine. Catalysis depends on for 2'-O-MTase activity residues lysine 2689 and glutamate 2725. S-adenosyl-L-methionine is bound at residue tyrosine 2727. The Nuclear localization signal motif lies at 2879–2912 (RKIMKVVNRWLFRHLSREKNPRLCTKEEFIAKVR). Positions 2946, 2950, 2955, and 2958 each coordinate Zn(2+). Positions 3036–3188 (GGFYADDTAG…RPVDDRFGLA (153 aa)) constitute a RdRp catalytic domain. 3 residues coordinate Zn(2+): histidine 3223, cysteine 3239, and cysteine 3358.

This sequence in the N-terminal section; belongs to the class I-like SAM-binding methyltransferase superfamily. mRNA cap 0-1 NS5-type methyltransferase family. Homodimer. Interacts (via N-terminus) with host EXOC1 (via C-terminus); this interaction results in EXOC1 degradation through the proteasome degradation pathway. In terms of assembly, forms heterodimers with envelope protein E in the endoplasmic reticulum and Golgi. As to quaternary structure, homodimer; in the endoplasmic reticulum and Golgi. Interacts with protein prM. Interacts with non-structural protein 1. Homodimer; Homohexamer when secreted. Interacts with envelope protein E. In terms of assembly, interacts (via N-terminus) with serine protease NS3. As to quaternary structure, forms a heterodimer with serine protease NS3. May form homooligomers. Forms a heterodimer with NS2B. Interacts with non-structural protein 2A (via N-terminus). Interacts with NS4B. Interacts with unphosphorylated RNA-directed RNA polymerase NS5; this interaction stimulates RNA-directed RNA polymerase NS5 guanylyltransferase activity. NS3 interacts with host PDCD6IP; this interaction contributes to virion release. In terms of assembly, interacts with serine protease NS3. As to quaternary structure, homodimer. Interacts with host STAT2; this interaction prevents the establishment of cellular antiviral state. Interacts with serine protease NS3. Interacts with host TRIM23; this interaction leads to NS5 ubiquitination. In terms of processing, specific enzymatic cleavages in vivo yield mature proteins. The nascent capsid protein C contains a C-terminal hydrophobic domain that act as a signal sequence for translocation of prM into the lumen of the ER. Mature capsid protein C is cleaved at a site upstream of this hydrophobic domain by NS3. prM is cleaved in post-Golgi vesicles by a host furin, releasing the mature small envelope protein M, and peptide pr. Non-structural protein 2A-alpha, a C-terminally truncated form of non-structural protein 2A, results from partial cleavage by NS3. Specific enzymatic cleavages in vivo yield mature proteins peptide 2K acts as a signal sequence and is removed from the N-terminus of NS4B by the host signal peptidase in the ER lumen. Signal cleavage at the 2K-4B site requires a prior NS3 protease-mediated cleavage at the 4A-2K site. Cleaved in post-Golgi vesicles by a host furin, releasing the mature small envelope protein M, and peptide pr. This cleavage is incomplete as up to 30% of viral particles still carry uncleaved prM. Post-translationally, N-glycosylated. In terms of processing, N-glycosylated. The excreted form is glycosylated and this is required for efficient secretion of the protein from infected cells. Polyubiquitinated; ubiquitination is probably mediated by host TRIM23 and is prerequisite for NS5-STAT2 interaction. NS5 is not ISGylated or sumoylated. Post-translationally, acetylated by host KAT5. Acetylation modulates NS3 RNA-binding and unwinding activities and plays an important positive role for viral replication. In terms of processing, phosphorylated on serines residues. This phosphorylation may trigger NS5 nuclear localization.

Its subcellular location is the virion. It is found in the host nucleus. It localises to the host cytoplasm. The protein localises to the host perinuclear region. The protein resides in the secreted. Its subcellular location is the virion membrane. It is found in the host endoplasmic reticulum membrane. It catalyses the reaction Selective hydrolysis of -Xaa-Xaa-|-Yaa- bonds in which each of the Xaa can be either Arg or Lys and Yaa can be either Ser or Ala.. The enzyme catalyses RNA(n) + a ribonucleoside 5'-triphosphate = RNA(n+1) + diphosphate. It carries out the reaction a ribonucleoside 5'-triphosphate + H2O = a ribonucleoside 5'-diphosphate + phosphate + H(+). The catalysed reaction is ATP + H2O = ADP + phosphate + H(+). It catalyses the reaction a 5'-end (5'-triphosphoguanosine)-ribonucleoside in mRNA + S-adenosyl-L-methionine = a 5'-end (N(7)-methyl 5'-triphosphoguanosine)-ribonucleoside in mRNA + S-adenosyl-L-homocysteine. The enzyme catalyses a 5'-end (N(7)-methyl 5'-triphosphoguanosine)-ribonucleoside in mRNA + S-adenosyl-L-methionine = a 5'-end (N(7)-methyl 5'-triphosphoguanosine)-(2'-O-methyl-ribonucleoside) in mRNA + S-adenosyl-L-homocysteine + H(+). In terms of biological role, plays a role in virus budding by binding to the cell membrane and gathering the viral RNA into a nucleocapsid that forms the core of a mature virus particle. During virus entry, may induce genome penetration into the host cytoplasm after hemifusion induced by the surface proteins. Can migrate to the cell nucleus where it modulates host functions. Inhibits RNA silencing by interfering with host Dicer. Its function is as follows. Prevents premature fusion activity of envelope proteins in trans-Golgi by binding to envelope protein E at pH6.0. After virion release in extracellular space, gets dissociated from E dimers. Functionally, acts as a chaperone for envelope protein E during intracellular virion assembly by masking and inactivating envelope protein E fusion peptide. prM is the only viral peptide matured by host furin in the trans-Golgi network probably to avoid catastrophic activation of the viral fusion activity in acidic Golgi compartment prior to virion release. prM-E cleavage is inefficient, and many virions are only partially matured. These uncleaved prM would play a role in immune evasion. In terms of biological role, may play a role in virus budding. Exerts cytotoxic effects by activating a mitochondrial apoptotic pathway through M ectodomain. May display a viroporin activity. Binds to host cell surface receptor and mediates fusion between viral and cellular membranes. Envelope protein is synthesized in the endoplasmic reticulum in the form of heterodimer with protein prM. They play a role in virion budding in the ER, and the newly formed immature particle is covered with 60 spikes composed of heterodimer between precursor prM and envelope protein E. The virion is transported to the Golgi apparatus where the low pH causes dissociation of PrM-E heterodimers and formation of E homodimers. prM-E cleavage is inefficient, and many virions are only partially matured. These uncleaved prM would play a role in immune evasion. Its function is as follows. Involved in immune evasion, pathogenesis and viral replication. Once cleaved off the polyprotein, is targeted to three destinations: the viral replication cycle, the plasma membrane and the extracellular compartment. Essential for viral replication. Required for formation of the replication complex and recruitment of other non-structural proteins to the ER-derived membrane structures. Excreted as a hexameric lipoparticle that plays a role against host immune response. Antagonizing the complement function. Binds to the host macrophages and dendritic cells. Inhibits signal transduction originating from Toll-like receptor 3 (TLR3). Functionally, component of the viral RNA replication complex that functions in virion assembly and antagonizes the host immune response. In terms of biological role, required cofactor for the serine protease function of NS3. May have membrane-destabilizing activity and form viroporins. Displays three enzymatic activities: serine protease, NTPase and RNA helicase. NS3 serine protease, in association with NS2B, performs its autocleavage and cleaves the polyprotein at dibasic sites in the cytoplasm: C-prM, NS2A-NS2B, NS2B-NS3, NS3-NS4A, NS4A-2K and NS4B-NS5. NS3 RNA helicase binds RNA and unwinds dsRNA in the 3' to 5' direction. Also plays a role in virus assembly. Its function is as follows. Regulates the ATPase activity of the NS3 helicase activity. NS4A allows NS3 helicase to conserve energy during unwinding. Functionally, functions as a signal peptide for NS4B and is required for the interferon antagonism activity of the latter. In terms of biological role, induces the formation of ER-derived membrane vesicles where the viral replication takes place. Inhibits interferon (IFN)-induced host STAT1 phosphorylation and nuclear translocation, thereby preventing the establishment of cellular antiviral state by blocking the IFN-alpha/beta pathway. Replicates the viral (+) and (-) RNA genome, and performs the capping of genomes in the cytoplasm. NS5 methylates viral RNA cap at guanine N-7 and ribose 2'-O positions. Besides its role in RNA genome replication, also prevents the establishment of cellular antiviral state by blocking the interferon-alpha/beta (IFN-alpha/beta) signaling pathway. IFN-I induces binding of NS5 to host IFN-activated transcription factor STAT2, preventing its transcriptional activity. Host TRIM23 is the E3 ligase that interacts with and polyubiquitinates NS5 to promote its binding to STAT2 and trigger IFN-I signaling inhibition. The polypeptide is Genome polyprotein (Aedes aegypti (Yellowfever mosquito)).